The following is a 505-amino-acid chain: Cyanidin 3-O-glucoside 7-O-glucosyltransferase (acyl-glucose) (505 aa).

The signal sequence occupies residues 1 to 25; that stretch reads MCPSFLVTLLLLQLSSLVVVLVVWA. A beta-D-glucoside-binding positions include Gln52, His152, and 197-198; that span reads NE. Glu198 acts as the Proton donor in catalysis. Cys217 and Cys225 are disulfide-bonded. Residues Asn224, Asn229, and Asn324 are each glycosylated (N-linked (GlcNAc...) asparagine). Positions 341 and 403 each coordinate a beta-D-glucoside. The Nucleophile role is filled by Glu403. N-linked (GlcNAc...) asparagine glycans are attached at residues Asn411 and Asn437. Trp447 and Tyr463 together coordinate a beta-D-glucoside. An N-linked (GlcNAc...) asparagine glycan is attached at Asn494.

It belongs to the glycosyl hydrolase 1 family.

Its subcellular location is the vacuole. The enzyme catalyses 1-O-(4-hydroxy-3-methoxybenzoyl)-beta-D-glucose + cyanidin 3-O-beta-D-glucoside = cyanidin 3,7-di-O-beta-D-glucoside + vanillate. It participates in pigment biosynthesis; anthocyanin biosynthesis. Its function is as follows. Beta-glycosidase that catalyzes the transfer of glucose moiety to anthocyanidin 3-glucoside at the 7 position. Anthocyanins are ubiquitous colored pigments that are responsible for variations in petal color. The sequence is that of Cyanidin 3-O-glucoside 7-O-glucosyltransferase (acyl-glucose) (AA7GT) from Delphinium grandiflorum (Siberian larkspur).